The sequence spans 466 residues: Ribulose bisphosphate carboxylase large chain (466 aa).

Lys5 bears the N6,N6,N6-trimethyllysine mark. Substrate contacts are provided by Asn114 and Thr164. Lys166 acts as the Proton acceptor in catalysis. Lys168 serves as a coordination point for substrate. Mg(2+)-binding residues include Lys192, Asp194, and Glu195. At Lys192 the chain carries N6-carboxylysine. Catalysis depends on His285, which acts as the Proton acceptor. Substrate-binding residues include Arg286, His318, and Ser370.

This sequence belongs to the RuBisCO large chain family. Type I subfamily. Heterohexadecamer of 8 large chains and 8 small chains; disulfide-linked. The disulfide link is formed within the large subunit homodimers. The cofactor is Mg(2+). The disulfide bond which can form in the large chain dimeric partners within the hexadecamer appears to be associated with oxidative stress and protein turnover.

It is found in the plastid. It localises to the chloroplast. The enzyme catalyses 2 (2R)-3-phosphoglycerate + 2 H(+) = D-ribulose 1,5-bisphosphate + CO2 + H2O. It catalyses the reaction D-ribulose 1,5-bisphosphate + O2 = 2-phosphoglycolate + (2R)-3-phosphoglycerate + 2 H(+). In terms of biological role, ruBisCO catalyzes two reactions: the carboxylation of D-ribulose 1,5-bisphosphate, the primary event in carbon dioxide fixation, as well as the oxidative fragmentation of the pentose substrate in the photorespiration process. Both reactions occur simultaneously and in competition at the same active site. In Drosera peltata (Pale sundew), this protein is Ribulose bisphosphate carboxylase large chain.